We begin with the raw amino-acid sequence, 449 residues long: Secretin receptor (449 aa).

The N-terminal stretch at 1-25 (MLSTMRPRLSLLLLRLLLLTKAAHT) is a signal peptide. The Extracellular portion of the chain corresponds to 26-141 (VGVPPRLCDV…NERRHAYLLK (116 aa)). Cystine bridges form between cysteine 46–cysteine 75, cysteine 66–cysteine 107, and cysteine 89–cysteine 123. 4 N-linked (GlcNAc...) asparagine glycosylation sites follow: asparagine 72, asparagine 100, asparagine 106, and asparagine 128. The chain crosses the membrane as a helical span at residues 142-167 (LKVMYTVGYSSSLAMLLVALSILCSF). Residues 168–174 (RRLHCTR) are Cytoplasmic-facing. The helical transmembrane segment at 175–195 (NYIHMHLFVSFILRALSNFIK) threads the bilayer. Residues 196–216 (DAVLFSSDDVTYCDAHKVGCK) are Extracellular-facing. An intrachain disulfide couples cysteine 215 to cysteine 285. A helical transmembrane segment spans residues 217-239 (LVMIFFQYCIMANYAWLLVEGLY). The Cytoplasmic segment spans residues 240–254 (LHTLLAISFFSERKY). A helical transmembrane segment spans residues 255–276 (LQAFVLLGWGSPAIFVALWAIT). At 277–291 (RHFLENTGCWDINAN) the chain is on the extracellular side. Asparagine 291 is a glycosylation site (N-linked (GlcNAc...) asparagine). Residues 292–315 (ASVWWVIRGPVILSILINFIFFIN) traverse the membrane as a helical segment. Residues 316 to 340 (ILRILMRKLRTQETRGSETNHYKRL) lie on the Cytoplasmic side of the membrane. The chain crosses the membrane as a helical span at residues 341 to 356 (AKSTLLLIPLFGIHYI). Topologically, residues 357 to 367 (VFAFSPEDAME) are extracellular. Residues 368–391 (VQLFFELALGSFQGLVVAVLYCFL) traverse the membrane as a helical segment. At 392-449 (NGEVQLEVQKKWRQWHLQEFPLRPVAFNNSFSNATNGPTHSTKASTEQSRSIPRASII) the chain is on the cytoplasmic side. Over residues 425–442 (ATNGPTHSTKASTEQSRS) the composition is skewed to polar residues. Residues 425 to 449 (ATNGPTHSTKASTEQSRSIPRASII) form a disordered region.

Belongs to the G-protein coupled receptor 2 family. In terms of processing, phosphorylated on Ser and Thr residues at the cytoplasmic C-terminus by G protein-coupled receptor kinases (GRKs). Post-translationally, N-glycosylated. In terms of tissue distribution, in the brain, expressed in the central amygdala, hippocampus, area postrema, nucleus of the tractus solitary and cerebellum.

It is found in the cell membrane. The protein localises to the basolateral cell membrane. Its function is as follows. G protein-coupled receptor activated by secretin (SCT), which is involved in different processes such as regulation of the pH of the duodenal content, food intake and water homeostasis. Ligand binding causes a conformation change that triggers signaling via guanine nucleotide-binding proteins (G proteins) and activates cAMP-dependent pathway. Upon binding to secretin, regulates the pH of the duodenum by (1) inhibiting the secretion of gastric acid from the parietal cells of the stomach and (2) stimulating the production of bicarbonate (NaHCO(3)) from the ductal cells of the pancreas. In addition to regulating the pH of the duodenal content, plays a central role in diet induced thermogenesis: acts as a non-sympathetic brown fat (BAT) activator mediating prandial thermogenesis, which consequentially induces satiation. Mechanistically, secretin released by the gut after a meal binds to secretin receptor (SCTR) in brown adipocytes, activating brown fat thermogenesis by stimulating lipolysis, which is sensed in the brain and promotes satiation. Also able to stimulate lipolysis in white adipocytes. Also plays an important role in cellular osmoregulation by regulating renal water reabsorption. Also plays a role in the central nervous system: required for synaptic plasticity. This chain is Secretin receptor, found in Rattus norvegicus (Rat).